Consider the following 80-residue polypeptide: Small ribosomal subunit protein bS18 (80 aa).

The protein belongs to the bacterial ribosomal protein bS18 family. Part of the 30S ribosomal subunit. Forms a tight heterodimer with protein bS6.

In terms of biological role, binds as a heterodimer with protein bS6 to the central domain of the 16S rRNA, where it helps stabilize the platform of the 30S subunit. The sequence is that of Small ribosomal subunit protein bS18 from Staphylococcus carnosus (strain TM300).